The sequence spans 798 residues: MNLQLIFWIGLISSICCVFGQADENRCLKANAKSCGECIQAGPNCGWCVNSTFLQEGMPTSARCDDLEALKKKGCHPDDIENPRGSKDVKKNKNVTNRSKGTAEKLQPEDITQIQPQQLVLQLRSGEPQTFTLKFKRAEDYPIDLYYLMDLSYSMKDDLENVKSLGTDLLNEMRRITSDFRIGFGSFVEKTVMPYISTTPAKLRNPCTSEQNCTSPFSYKNVLSLTDKGEVFNELVGKQRISGNLDSPEGGFDAIMQVAVCGSLIGWRNVTRLLVFSTDAGFHFAGDGKLGGIVLPNDGQCHLENDVYTMSHYYDYPSIAHLVQKLSENNIQTIFAVTEEFQPVYKELKNLIPKSAVGTLSANSSNVIQLIIDAYNSLSSEVILENSKLPEGVTISYKSYCKNGVNGTGENGRKCSNISIGDEVQFEISITANKCPNKNSEIIKIKPLGFTEEVEIILQFICECECQNEGIPSSPKCHEGNGSFECGACRCNEGRVGRHCECSTDEVNSEDMDAYCRKENSSEICSNNGECVCGQCVCRKRDNTNEIYSGKFCECDNFNCDRSNGLICGGNGVCKCRVCECNPNYTGSACDCSLDTTSCMATNGQICNGRGICECGACKCTDPKFQGPTCEMCQTCLGVCAEHKECVQCRAFNKGEKKDTCAQECSHFNITKVENRDKLPQPGQVDPLSHCKEKDVDDCWFYFTYSVNGNNEAIVHVVETPECPTGPDIIPIVAGVVAGIVLIGLALLLIWKLLMIIHDTREFAKFEKEKMNAKWDTGENPIYKSAVTTVVNPKYEGK.

An N-terminal signal peptide occupies residues 1 to 20; that stretch reads MNLQLIFWIGLISSICCVFG. Residues 21–728 lie on the Extracellular side of the membrane; it reads QADENRCLKA…ETPECPTGPD (708 aa). The region spanning 26–76 is the PSI domain; the sequence is RCLKANAKSCGECIQAGPNCGWCVNSTFLQEGMPTSARCDDLEALKKKGCH. Disulfide bonds link cysteine 27–cysteine 45, cysteine 35–cysteine 464, cysteine 38–cysteine 64, cysteine 48–cysteine 75, cysteine 207–cysteine 213, cysteine 261–cysteine 301, cysteine 401–cysteine 415, cysteine 435–cysteine 462, cysteine 466–cysteine 486, cysteine 477–cysteine 489, cysteine 491–cysteine 500, cysteine 502–cysteine 533, cysteine 516–cysteine 531, cysteine 525–cysteine 536, cysteine 538–cysteine 553, cysteine 555–cysteine 576, cysteine 560–cysteine 574, cysteine 568–cysteine 579, cysteine 581–cysteine 590, cysteine 592–cysteine 615, cysteine 599–cysteine 613, cysteine 607–cysteine 618, cysteine 620–cysteine 630, cysteine 633–cysteine 636, cysteine 640–cysteine 691, cysteine 646–cysteine 665, cysteine 649–cysteine 661, and cysteine 699–cysteine 723. N-linked (GlcNAc...) asparagine glycosylation occurs at asparagine 50. The span at 75–91 shows a compositional bias: basic and acidic residues; that stretch reads CHPDDIENPRGSKDVKK. Residues 75–107 are disordered; that stretch reads CHPDDIENPRGSKDVKKNKNVTNRSKGTAEKLQ. Asparagine 94 and asparagine 97 each carry an N-linked (GlcNAc...) asparagine glycan. The VWFA domain maps to 140–378; sequence DYPIDLYYLM…QLIIDAYNSL (239 aa). 2 residues coordinate Mg(2+): serine 152 and serine 154. Residues serine 154, aspartate 157, aspartate 158, and glutamate 189 each contribute to the Ca(2+) site. Positions 207–213 are CX3CL1-binding; that stretch reads CTSEQNC. Residue asparagine 212 is glycosylated (N-linked (GlcNAc...) asparagine). Asparagine 244, aspartate 246, proline 248, and glutamate 249 together coordinate Ca(2+). Residue glutamate 249 coordinates Mg(2+). Asparagine 269 is a glycosylation site (N-linked (GlcNAc...) asparagine). The interval 295–314 is CX3CL1-binding; it reads LPNDGQCHLENDVYTMSHYY. Alanine 362 provides a ligand contact to Ca(2+). 3 N-linked (GlcNAc...) asparagine glycosylation sites follow: asparagine 363, asparagine 406, and asparagine 417. Residues 383-465 form an interaction with TMEM182 region; sequence ILENSKLPEG…IILQFICECE (83 aa). I-EGF domains follow at residues 466-501, 502-554, 555-591, and 592-631; these read CQNEGIPSSPKCHEGNGSFECGACRCNEGRVGRHCE, CSTD…KFCE, CDNFNCDRSNGLICGGNGVCKCRVCECNPNYTGSACD, and CSLDTTSCMATNGQICNGRGICECGACKCTDPKFQGPTCE. An N-linked (GlcNAc...) asparagine glycan is attached at asparagine 481. Asparagine 520 carries an N-linked (GlcNAc...) asparagine glycan. Residue asparagine 584 is glycosylated (N-linked (GlcNAc...) asparagine). An N-linked (GlcNAc...) asparagine glycan is attached at asparagine 669. The helical transmembrane segment at 729–751 threads the bilayer; it reads IIPIVAGVVAGIVLIGLALLLIW. Over 752 to 798 the chain is Cytoplasmic; sequence KLLMIIHDTREFAKFEKEKMNAKWDTGENPIYKSAVTTVVNPKYEGK. The interval 762–767 is signal for sorting from recycling endosomes; interaction with ACAP1; the sequence is EFAKFE. Threonine 777 is modified (phosphothreonine). Residue tyrosine 783 is modified to Phosphotyrosine. Residue serine 785 is modified to Phosphoserine. The interval 785–792 is interaction with ITGB1BP1; that stretch reads SAVTTVVN. Threonine 789 bears the Phosphothreonine mark. N6-acetyllysine; alternate is present on lysine 794. Lysine 794 is covalently cross-linked (Glycyl lysine isopeptide (Lys-Gly) (interchain with G-Cter in SUMO1); alternate).

It belongs to the integrin beta chain family. In terms of assembly, interacts with seprase FAP (seprase); the interaction occurs at the cell surface of invadopodia membrane in a collagen-dependent manner. Heterodimer of an alpha and a beta subunit. Beta-1 associates with either alpha-1, alpha-2, alpha-3, alpha-4, alpha-5, alpha-6, alpha-7, alpha-8, alpha-9, alpha-10, alpha-11 or alpha-V. ITGA6:ITGB1 is found in a complex with CD9; interaction takes place in oocytes and is involved in sperm-egg fusion. Binds LGALS3BP and NMRK2, when associated with alpha-7, but not with alpha-5. Interacts with FLNA, FLNB, FLNC and RANBP9. Interacts with KRT1 in the presence of RACK1 and SRC. Interacts with JAML; integrin alpha-4/beta-1 may regulate leukocyte to endothelial cells adhesion by controlling JAML homodimerization. Interacts with RAB21. Interacts (via the cytoplasmic region) with RAB25 (via the hypervariable C-terminal region). Interacts with MYO10. Interacts with ITGB1BP1 (via C-terminal region); the interaction is a prerequisite for focal adhesion disassembly. Interacts with TLN1; the interaction is prevented by competitive binding of ITGB1BP1. Interacts with ACAP1; required for ITGB1 recycling. Interacts with ASAP3. Interacts with FERMT2; the interaction is inhibited in presence of ITGB1BP1. Interacts with DAB2. Interacts with FGR and HCK. Interacts with alpha-7A and alpha-7B in adult skeletal muscle. Interacts with alpha-7B in cardiomyocytes of adult heart. Interacts with EMP2; the interaction may be direct or indirect and ITGB1 has a heterodimer form. ITGA5:ITGB1 interacts with CCN3. ITGA4:ITGB1 is found in a ternary complex with CX3CR1 and CX3CL1. ITGA5:ITGB1 interacts with FBN1. ITGA5:ITGB1 acts as a receptor for fibronectin FN1 and mediates R-G-D-dependent cell adhesion to FN1. ITGA5:ITGB1 interacts with IL1B. Interacts with MDK. ITGA4:ITGB1 interacts with MDK; this interaction mediates MDK-induced osteoblast cells migration through PXN phosphorylation. ITGA6:ITGB1 interacts with MDK; this interaction mediates MDK-induced neurite-outgrowth. ITGA5:ITGB1 interacts with ACE2. Interacts with TMEM182 and LAMB1. Interacts with tensin TNS3; TNS3 also interacts with PEAK1, thus acting as an adapter molecule to bridge the association of PEAK1 with ITGB1. Interacts with tensin TNS4; the interaction displaces tensin TNS3 from the ITGB1 cytoplasmic tail and promotes ITGB1 stability. Integrin ITGA9:ITGB1 interacts with SPP1/OPN (via N-terminus). Integrin ITGA9:ITGB1 interacts with TNC/TNFN3 (via the 3rd Fibronectin type-III domain). Integrins ITGA4:ITGB1 and ITGA9:ITGB1 interact with SVEP1 (via Sushi domain 21); thereby inhibit Ca(2+) intracellular signaling and as a result repress vasocontraction. ITGA4:ITGB1 and ITGA5:ITGB1 interacts with SELP. Interacts with CD248. ITGA5:ITGB1 interacts with IGFBP1. ITGA4:ITGB1 interacts with BCAM. Interacts with ADGRG6.

Its subcellular location is the cell membrane. It is found in the cell projection. It localises to the invadopodium membrane. The protein localises to the ruffle membrane. The protein resides in the recycling endosome. Its subcellular location is the melanosome. It is found in the lamellipodium. It localises to the ruffle. The protein localises to the cell junction. The protein resides in the focal adhesion. Integrins alpha-1/beta-1, alpha-2/beta-1, alpha-10/beta-1 and alpha-11/beta-1 are receptors for collagen. Integrins alpha-1/beta-1 and alpha-2/beta-2 recognize the proline-hydroxylated sequence G-F-P-G-E-R in collagen. Integrins alpha-2/beta-1, alpha-3/beta-1, alpha-4/beta-1, alpha-5/beta-1, alpha-8/beta-1, alpha-10/beta-1, alpha-11/beta-1 and alpha-V/beta-1 are receptors for fibronectin. Alpha-4/beta-1 recognizes one or more domains within the alternatively spliced CS-1 and CS-5 regions of fibronectin. Integrin alpha-5/beta-1 is a receptor for fibrinogen. Integrin alpha-1/beta-1, alpha-2/beta-1, alpha-6/beta-1 and alpha-7/beta-1 are receptors for lamimin. Integrin alpha-6/beta-1 (ITGA6:ITGB1) is present in oocytes and is involved in sperm-egg fusion. Integrin alpha-4/beta-1 is a receptor for VCAM1 and recognizes the sequence Q-I-D-S in VCAM1. Integrin alpha-9/beta-1 is a receptor for VCAM1, cytotactin and osteopontin. It recognizes the sequence A-E-I-D-G-I-E-L in cytotactin. Integrin alpha-3/beta-1 is a receptor for epiligrin, thrombospondin and CSPG4. Integrin alpha-3/beta-1 provides a docking site for FAP (seprase) at invadopodia plasma membranes in a collagen-dependent manner and hence may participate in the adhesion, formation of invadopodia and matrix degradation processes, promoting cell invasion. Alpha-3/beta-1 may mediate with LGALS3 the stimulation by CSPG4 of endothelial cells migration. Integrin alpha-V/beta-1 is a receptor for vitronectin. Beta-1 integrins recognize the sequence R-G-D in a wide array of ligands. When associated with alpha-7/beta-1 integrin, regulates cell adhesion and laminin matrix deposition. Involved in promoting endothelial cell motility and angiogenesis. Involved in osteoblast compaction through the fibronectin fibrillogenesis cell-mediated matrix assembly process and the formation of mineralized bone nodules. May be involved in up-regulation of the activity of kinases such as PKC via binding to KRT1. Together with KRT1 and RACK1, serves as a platform for SRC activation or inactivation. Plays a mechanistic adhesive role during telophase, required for the successful completion of cytokinesis. ITGA4:ITGB1 binds to fractalkine (CX3CL1) and may act as its coreceptor in CX3CR1-dependent fractalkine signaling. ITGA4:ITGB1 and ITGA5:ITGB1 bind to PLA2G2A via a site (site 2) which is distinct from the classical ligand-binding site (site 1) and this induces integrin conformational changes and enhanced ligand binding to site 1. ITGA5:ITGB1 acts as a receptor for fibrillin-1 (FBN1) and mediates R-G-D-dependent cell adhesion to FBN1. ITGA5:ITGB1 is a receptor for IL1B and binding is essential for IL1B signaling. ITGA5:ITGB3 is a receptor for soluble CD40LG and is required for CD40/CD40LG signaling. Plays an important role in myoblast differentiation and fusion during skeletal myogenesis. ITGA9:ITGB1 may play a crucial role in SVEP1/polydom-mediated myoblast cell adhesion. Integrins ITGA9:ITGB1 and ITGA4:ITGB1 repress PRKCA-mediated L-type voltage-gated channel Ca(2+) influx and ROCK-mediated calcium sensitivity in vascular smooth muscle cells via their interaction with SVEP1, thereby inhibit vasocontraction. The protein is Integrin beta-1 (ITGB1) of Felis catus (Cat).